A 262-amino-acid chain; its full sequence is MIHSTAKIHPSSIIEEGAKIGENVVIGPFCIVGSDVQIGKGTTLHSHVVVKGVTTIGEDNQIFQFASIGEVNQDLKYQGEPTKTIIGHRNRIRESVTIHRGTVQGGGVTRIGDDNLLMINAHIAHDCQIGNRCILANNATLAGHVELGDFVIVGGMSAIHQFVIVGAHVMLGGGSMVSQDVPPYVMAQGNHARPFGVNIEGLKRRGFDKPTLHAIRNVYKLIYRSGKTLEEVIPEIENYAQTESAVSFFLDFFNRSTRGIIR.

It belongs to the transferase hexapeptide repeat family. LpxA subfamily. Homotrimer.

It is found in the cytoplasm. The enzyme catalyses a (3R)-hydroxyacyl-[ACP] + UDP-N-acetyl-alpha-D-glucosamine = a UDP-3-O-[(3R)-3-hydroxyacyl]-N-acetyl-alpha-D-glucosamine + holo-[ACP]. It participates in glycolipid biosynthesis; lipid IV(A) biosynthesis; lipid IV(A) from (3R)-3-hydroxytetradecanoyl-[acyl-carrier-protein] and UDP-N-acetyl-alpha-D-glucosamine: step 1/6. Functionally, involved in the biosynthesis of lipid A, a phosphorylated glycolipid that anchors the lipopolysaccharide to the outer membrane of the cell. The chain is Acyl-[acyl-carrier-protein]--UDP-N-acetylglucosamine O-acyltransferase from Histophilus somni (strain 129Pt) (Haemophilus somnus).